The chain runs to 495 residues: Cytochrome P450 monooxygenase aneF (495 aa).

A helical transmembrane segment spans residues 1-21 (MIAGLVLVVLLTKYLQRVFLH). The N-linked (GlcNAc...) asparagine glycan is linked to Asn-47. Position 437 (Cys-437) interacts with heme.

The protein belongs to the cytochrome P450 family. It depends on heme as a cofactor.

It is found in the membrane. The enzyme catalyses dauca-4,7-diene + 3 reduced [NADPH--hemoprotein reductase] + 3 O2 = asperaculane D + 3 oxidized [NADPH--hemoprotein reductase] + 4 H2O + 4 H(+). The protein operates within secondary metabolite biosynthesis. In terms of biological role, cytochrome P450 monooxygenase; part of the gene cluster that mediates the biosynthesis of aculenes, a unique type of norsesquiterpenes that contain a nordaucane skeleton linked to an L-proline moiety and are of mixed biosynthetic origin. The pathway begins with the synthesis of dauca-4,7-diene by the terpene cyclase aneC using farnesyl pyrophosphate (FPP) as substrate. The cytochrome P450 monooxygenase aneF then performs the initial oxidation at C-12 of dauca-4,7-diene to yield asperaculane D. Asperaculane D is substrate of the cytochrome P450 monooxygenase aneD for C-10 hydroxylation to yield asperaculane E. The cytochrome P450 monooxygenase aneG then converts asperaculane E into aculene D via C-2 oxidation. The monomodular nonribosomal peptide synthtase aneB adenylates L-proline and the thiohydrolase aneE transfers this activated L-proline derivative to aculenes D and C to produce respectively aculenes B and A. The dioxygenase aneA converts aculene D into aculene C, and aculene B into aculene A by introducing the 5,6-alkene moiety. Asperculanes A, B, C and F, as well as 14-prolyl asperculane C, might be shunt products of the pathway. The protein is Cytochrome P450 monooxygenase aneF of Aspergillus aculeatus (strain ATCC 16872 / CBS 172.66 / WB 5094).